Consider the following 194-residue polypeptide: MAKPEKVSAVAEITEQFKGSTAAVVTEYRGLSVGNITTLRRALGEGATYSVAKNTLVKRAAAEAGIEGLDDLFVGPTAIAFIKGEPVDAAKALKNFAKDNKALIIKGGYMDGAALSVEEVNKIADLESREILLAKLAGAMKGNLAKAAGLFNAPASQMARLAAALQEKKAAEGGAAEAPAEAATEAPAEAEAES.

A compositionally biased stretch (low complexity) spans 172–187 (EGGAAEAPAEAATEAP). The tract at residues 172–194 (EGGAAEAPAEAATEAPAEAEAES) is disordered.

It belongs to the universal ribosomal protein uL10 family. As to quaternary structure, part of the ribosomal stalk of the 50S ribosomal subunit. The N-terminus interacts with L11 and the large rRNA to form the base of the stalk. The C-terminus forms an elongated spine to which L12 dimers bind in a sequential fashion forming a multimeric L10(L12)X complex.

Forms part of the ribosomal stalk, playing a central role in the interaction of the ribosome with GTP-bound translation factors. The polypeptide is Large ribosomal subunit protein uL10 (Rhodococcus erythropolis (strain PR4 / NBRC 100887)).